We begin with the raw amino-acid sequence, 128 residues long: Azurin (128 aa).

One can recognise a Plastocyanin-like domain in the interval 1–128; that stretch reads AECSVDIQGN…ALMKGTLTLK (128 aa). A disulfide bond links Cys-3 and Cys-26. Positions 46, 112, 117, and 121 each coordinate Cu cation.

It localises to the periplasm. Its function is as follows. Transfers electrons from cytochrome c551 to cytochrome oxidase. This is Azurin from Pseudomonas aeruginosa.